The sequence spans 126 residues: C-type natriuretic peptide (126 aa).

An N-terminal signal peptide occupies residues Met1 to Ala23. Residues Pro20 to Leu71 are disordered. Residues Lys24 to Arg73 constitute a propeptide that is removed on maturation. Over residues Ala46–Ala62 the composition is skewed to gly residues. Cys110 and Cys126 form a disulfide bridge.

This sequence belongs to the natriuretic peptide family. Degraded by IDE (in vitro).

It localises to the secreted. Hormone which plays a role in endochondral ossification through regulation of cartilaginous growth plate chondrocytes proliferation and differentiation. May also be vasoactive and natriuretic. Acts by specifically binding and stimulating NPR2 to produce cGMP. Binds the clearance receptor NPR3. The protein is C-type natriuretic peptide (NPPC) of Bos taurus (Bovine).